The sequence spans 491 residues: Transcription factor AP-2-alpha (491 aa).

The segment at 74–161 (GASNGTARLP…GQRQSQESGL (88 aa)) is disordered. The PPxY motif motif lies at 111 to 116 (YFPPPY). 2 stretches are compositionally biased toward low complexity: residues 119–128 (IYPQSQDPYS) and 142–155 (QPQP…GQRQ). Glycyl lysine isopeptide (Lys-Gly) (interchain with G-Cter in SUMO2) cross-links involve residues K231 and K238. The residue at position 293 (S293) is a Phosphoserine; by PKA. The segment at 334-464 (RRKAANVTLL…YLTEALKAMD (131 aa)) is H-S-H (helix-span-helix), dimerization. Over residues 468-481 (LSNNPNSHTDNSAK) the composition is skewed to polar residues. The interval 468-491 (LSNNPNSHTDNSAKSSDKEEKHRK) is disordered. Basic and acidic residues predominate over residues 482-491 (SSDKEEKHRK).

This sequence belongs to the AP-2 family. In terms of assembly, binds DNA as a dimer. Can form homodimers or heterodimers with other AP-2 family members. Interacts with WWOX. Interacts with CITED4. Interacts with UBE2I. Interacts with RALBP1 in a complex also containing EPN1 and NUMB during interphase and mitosis. Interacts with KCTD1; this interaction represses transcription activation. Interacts (via C-terminus) with CITED2 (via C-terminus); the interaction stimulates TFAP2A-transcriptional activation. Interacts (via N-terminus) with EP300 (via N-terminus); the interaction requires CITED2. Interacts with KCTD15; this interaction inhibits TFAP2A transcriptional activation.

The protein localises to the nucleus. In terms of biological role, sequence-specific DNA-binding protein that interacts with inducible viral and cellular enhancer elements to regulate transcription of selected genes. AP-2 factors bind to the consensus sequence 5'-GCCNNNGGC-3' and activate genes involved in a large spectrum of important biological functions including proper eye, face, body wall, limb and neural tube development. They also suppress a number of genes including MCAM/MUC18, C/EBP alpha and MYC. AP-2-alpha is the only AP-2 protein required for early morphogenesis of the lens vesicle. Together with the CITED2 coactivator, stimulates the PITX2 P1 promoter transcription activation. Associates with chromatin to the PITX2 P1 promoter region. In Ovis aries (Sheep), this protein is Transcription factor AP-2-alpha (TFAP2A).